The following is a 248-amino-acid chain: Probable transcriptional regulatory protein FTF0655 (248 aa).

This sequence belongs to the TACO1 family.

It localises to the cytoplasm. The polypeptide is Probable transcriptional regulatory protein FTF0655 (Francisella tularensis subsp. tularensis (strain FSC 198)).